A 146-amino-acid polypeptide reads, in one-letter code: Large ribosomal subunit protein uL15 (146 aa).

A disordered region spans residues 1-64; it reads MELNSIKPAA…MPMHRRLPKR (64 aa). Over residues 30-39 the composition is skewed to basic residues; the sequence is TATKGHKGQK.

It belongs to the universal ribosomal protein uL15 family. Part of the 50S ribosomal subunit.

In terms of biological role, binds to the 23S rRNA. In Geotalea daltonii (strain DSM 22248 / JCM 15807 / FRC-32) (Geobacter daltonii), this protein is Large ribosomal subunit protein uL15.